The following is a 196-amino-acid chain: uncharacterized protein (196 aa).

This is an uncharacterized protein from Mycoplasma pneumoniae (strain ATCC 29342 / M129 / Subtype 1) (Mycoplasmoides pneumoniae).